Consider the following 628-residue polypeptide: Probable potassium transport system protein Kup (628 aa).

Helical transmembrane passes span 12 to 32 (ALPL…IGTS), 57 to 77 (LLSL…VMLV), 106 to 126 (WYLL…GVLT), 141 to 161 (ISPA…AAVF), 174 to 194 (FYGP…VYGI), 219 to 239 (LAGV…ALYA), 253 to 273 (WLFV…AILL), 295 to 315 (LLFL…TGVF), 343 to 363 (IYVG…VLGF), 369 to 389 (LASA…ILFV), 402 to 422 (AVIA…SANL), and 425 to 445 (LHEG…VMVS).

Belongs to the HAK/KUP transporter (TC 2.A.72) family.

The protein resides in the cell inner membrane. The enzyme catalyses K(+)(in) + H(+)(in) = K(+)(out) + H(+)(out). In terms of biological role, transport of potassium into the cell. Likely operates as a K(+):H(+) symporter. In Azorhizobium caulinodans (strain ATCC 43989 / DSM 5975 / JCM 20966 / LMG 6465 / NBRC 14845 / NCIMB 13405 / ORS 571), this protein is Probable potassium transport system protein Kup.